The primary structure comprises 240 residues: Uridylate kinase (240 aa).

Position 13-16 (13-16) interacts with ATP; the sequence is KLSG. Positions 21-26 are involved in allosteric activation by GTP; sequence GEKGFG. UMP is bound at residue Gly-55. ATP contacts are provided by Gly-56 and Arg-60. Residues Asp-75 and 136–143 contribute to the UMP site; that span reads IGNPYFST. Residues Asn-164, Tyr-170, and Asp-173 each coordinate ATP.

It belongs to the UMP kinase family. In terms of assembly, homohexamer.

The protein resides in the cytoplasm. The catalysed reaction is UMP + ATP = UDP + ADP. Its pathway is pyrimidine metabolism; CTP biosynthesis via de novo pathway; UDP from UMP (UMPK route): step 1/1. Its activity is regulated as follows. Allosterically activated by GTP. Inhibited by UTP. Catalyzes the reversible phosphorylation of UMP to UDP. This Staphylococcus aureus (strain Newman) protein is Uridylate kinase.